Reading from the N-terminus, the 94-residue chain is Phosphoribosyl-ATP pyrophosphatase (94 aa).

The protein belongs to the PRA-PH family.

Its subcellular location is the cytoplasm. The enzyme catalyses 1-(5-phospho-beta-D-ribosyl)-ATP + H2O = 1-(5-phospho-beta-D-ribosyl)-5'-AMP + diphosphate + H(+). It participates in amino-acid biosynthesis; L-histidine biosynthesis; L-histidine from 5-phospho-alpha-D-ribose 1-diphosphate: step 2/9. In Pyrobaculum aerophilum (strain ATCC 51768 / DSM 7523 / JCM 9630 / CIP 104966 / NBRC 100827 / IM2), this protein is Phosphoribosyl-ATP pyrophosphatase (hisE).